We begin with the raw amino-acid sequence, 268 residues long: Testis-specific serine/threonine-protein kinase 3 (268 aa).

In terms of domain architecture, Protein kinase spans 10–265 (YQLGKTIGEG…IEEVSWHPWL (256 aa)). ATP contacts are provided by residues 16-24 (IGEGTYSKV) and Lys39. Residue Asp134 is the Proton acceptor of the active site. At Ser166 the chain carries Phosphoserine; by autocatalysis. At Thr168 the chain carries Phosphothreonine; by PDPK1.

It belongs to the protein kinase superfamily. CAMK Ser/Thr protein kinase family. Requires Mg(2+) as cofactor. It depends on Mn(2+) as a cofactor. Autophosphorylated at Ser-166. Phosphorylation at Thr-168 by PDPK1 activates the serine/threonine protein kinase activity. Developmentally expressed in testicular germ cells. In adult testis, expression was detected in round and condensing spermatids, but not in meiotic pachytene spermatocytes. Not expressed in brain, ovary, kidney, liver or early embryonic cells.

It localises to the cell projection. The protein resides in the cilium. The protein localises to the flagellum. It catalyses the reaction L-seryl-[protein] + ATP = O-phospho-L-seryl-[protein] + ADP + H(+). The enzyme catalyses L-threonyl-[protein] + ATP = O-phospho-L-threonyl-[protein] + ADP + H(+). Its activity is regulated as follows. Activated by phosphorylation on Thr-168 by PDPK1. In terms of biological role, serine/threonine protein kinase required for spermatid development and male fertility. This Mus musculus (Mouse) protein is Testis-specific serine/threonine-protein kinase 3.